A 299-amino-acid polypeptide reads, in one-letter code: Homeobox protein Nkx-2.5 (299 aa).

Residues 90–119 (KDPKDHKKDICPLQKTLEHDKREAEDPERP) show a composition bias toward basic and acidic residues. The disordered stretch occupies residues 90–128 (KDPKDHKKDICPLQKTLEHDKREAEDPERPRQRKRRKPR). A DNA-binding region (homeobox) is located at residues 124 to 183 (RRKPRVLFSQAQVYELERRFKQQKYLSAPERDHLANVLKLTSTQVKIWFQNRRYKCKRQR).

This sequence belongs to the NK-2 homeobox family. As to quaternary structure, homodimer (via the homeobox); binds DNA as homodimer. Heart and gut tissue.

The protein resides in the nucleus. In terms of biological role, transcription factor required for the development of the heart and the spleen. Implicated in commitment to and/or differentiation of the myocardial lineage. May regulate the expression of genes involved in cardiogenesis and play a role in the formation of gut and the pharyngeal region. Binds to the core DNA motif of promoter. The sequence is that of Homeobox protein Nkx-2.5 (nkx-2.5) from Xenopus laevis (African clawed frog).